The primary structure comprises 265 residues: Protein Msed_2121 (265 aa).

Belongs to the CinA family.

The polypeptide is Protein Msed_2121 (Metallosphaera sedula (strain ATCC 51363 / DSM 5348 / JCM 9185 / NBRC 15509 / TH2)).